Consider the following 147-residue polypeptide: MESPRIHGGAEEKSSCESGWTMYIEDTFHGNHHSEVVYEEEDDGFSVKEVDDDGDGDEDDDDDDDDDSSNNESDDSMTSDASSWPSTHQPPRSTKNHAAAKNSNAKQVNNQTENRVRDRFSDEGEESELKARTRTTAASRVKVSKTK.

The SOFL-A signature appears at 18–23 (SGWTMY). Positions 32 to 147 (HHSEVVYEEE…ASRVKVSKTK (116 aa)) are disordered. The span at 37–77 (VYEEEDDGFSVKEVDDDGDGDEDDDDDDDDDSSNNESDDSM) shows a compositional bias: acidic residues. The SOFL-B signature appears at 76-85 (SMTSDASSWP). Residues 78-93 (TSDASSWPSTHQPPRS) show a composition bias toward polar residues. Residues 96–106 (NHAAAKNSNAK) show a composition bias toward low complexity. Over residues 114 to 131 (NRVRDRFSDEGEESELKA) the composition is skewed to basic and acidic residues.

Belongs to the SOFL plant protein family. Predominantly expressed in the vascular tissues of seedlings, developing leaves, flowers and siliques, but barely detectable in roots and stems.

Its subcellular location is the cytoplasm. It is found in the nucleus. Involved in cytokinin-mediated development. Together with SOFL2, triggers the endogenous content of specific bioactive cytokinins derived from the biosynthetic intermediates trans-zeatin riboside monophosphate (tZRMP) and N(6)-(Delta(2)-isopentenyl)adenosine monophosphate (iPRMP) such as N-glucosides trans-zeatin 7-glucoside (tZ7G), cis-zeatin 7-glucoside (cZ7G) and N(6)-(Delta(2)-isopentenyl)adenine 7-glucoside (iP7G). The polypeptide is Protein SOB FIVE-LIKE 2 (Arabidopsis thaliana (Mouse-ear cress)).